Here is a 488-residue protein sequence, read N- to C-terminus: Cobyric acid synthase (488 aa).

One can recognise a GATase cobBQ-type domain in the interval 252-440; that stretch reads VPLIAVLRFP…VHGLFANDRQ (189 aa). Cys-334 serves as the catalytic Nucleophile. The active site involves His-432.

It belongs to the CobB/CobQ family. CobQ subfamily.

It participates in cofactor biosynthesis; adenosylcobalamin biosynthesis. Its function is as follows. Catalyzes amidations at positions B, D, E, and G on adenosylcobyrinic A,C-diamide. NH(2) groups are provided by glutamine, and one molecule of ATP is hydrogenolyzed for each amidation. In Methylorubrum populi (strain ATCC BAA-705 / NCIMB 13946 / BJ001) (Methylobacterium populi), this protein is Cobyric acid synthase.